Here is a 350-residue protein sequence, read N- to C-terminus: tRNA uridine(34) hydroxylase (350 aa).

The Rhodanese domain maps to 146-240 (DDPDAVFIDM…YARRAREQGL (95 aa)). Cysteine 200 serves as the catalytic Cysteine persulfide intermediate. The span at 319-328 (RRRRAGRENG) shows a compositional bias: basic and acidic residues. Positions 319–350 (RRRRAGRENGNKIFNKSRGRLNSKLSIPDPAE) are disordered.

Belongs to the TrhO family.

The catalysed reaction is uridine(34) in tRNA + AH2 + O2 = 5-hydroxyuridine(34) in tRNA + A + H2O. Catalyzes oxygen-dependent 5-hydroxyuridine (ho5U) modification at position 34 in tRNAs. The polypeptide is tRNA uridine(34) hydroxylase (Salmonella agona (strain SL483)).